We begin with the raw amino-acid sequence, 394 residues long: Phosphoglycerate kinase (394 aa).

Residues 21-23 (DFN), arginine 36, 59-62 (HLGR), arginine 118, and arginine 151 contribute to the substrate site. Serine 183 carries the phosphoserine modification. 2 residues coordinate ATP: lysine 201 and glycine 292. Threonine 299 bears the Phosphothreonine mark. ATP-binding positions include glutamate 323 and 350-353 (GGDS).

Belongs to the phosphoglycerate kinase family. Monomer.

The protein localises to the cytoplasm. The enzyme catalyses (2R)-3-phosphoglycerate + ATP = (2R)-3-phospho-glyceroyl phosphate + ADP. The protein operates within carbohydrate degradation; glycolysis; pyruvate from D-glyceraldehyde 3-phosphate: step 2/5. The protein is Phosphoglycerate kinase of Bacillus anthracis (strain A0248).